The sequence spans 295 residues: 4-hydroxy-tetrahydrodipicolinate synthase (295 aa).

Thr48 provides a ligand contact to pyruvate. The active-site Proton donor/acceptor is the Tyr136. Lys164 functions as the Schiff-base intermediate with substrate in the catalytic mechanism. Position 206 (Ile206) interacts with pyruvate.

Belongs to the DapA family. In terms of assembly, homotetramer; dimer of dimers.

The protein resides in the cytoplasm. The catalysed reaction is L-aspartate 4-semialdehyde + pyruvate = (2S,4S)-4-hydroxy-2,3,4,5-tetrahydrodipicolinate + H2O + H(+). The protein operates within amino-acid biosynthesis; L-lysine biosynthesis via DAP pathway; (S)-tetrahydrodipicolinate from L-aspartate: step 3/4. In terms of biological role, catalyzes the condensation of (S)-aspartate-beta-semialdehyde [(S)-ASA] and pyruvate to 4-hydroxy-tetrahydrodipicolinate (HTPA). This is 4-hydroxy-tetrahydrodipicolinate synthase from Actinobacillus pleuropneumoniae serotype 7 (strain AP76).